A 445-amino-acid chain; its full sequence is Endoplasmic reticulum membrane adapter protein XK (445 aa).

The Cytoplasmic segment spans residues 1 to 2; sequence MK. The chain crosses the membrane as a helical span at residues 3–23; sequence FPASVLASVFLFVAETMAALY. The Extracellular segment spans residues 24–37; sequence LSSTYRSAGDRMWQ. The chain crosses the membrane as a helical span at residues 38–58; the sequence is ALTLFFSLMPCTLVQLTLLFV. Residues 59–68 lie on the Cytoplasmic side of the membrane; sequence HRDLSRDRPL. Residues 69–89 traverse the membrane as a helical segment; that stretch reads VLLMHLLQLGPLYRCCEVFCI. The Extracellular segment spans residues 90 to 140; sequence YCQSDQNEEPYVSITKKRQMPKDGLSEEVEKEVGQSEGKLFTHRSAFSRAS. Residue S115 is modified to Phosphoserine. The chain crosses the membrane as a helical span at residues 141 to 161; the sequence is VIQAFLGSAPQLTLQLYITVL. Residues 162 to 170 lie on the Cytoplasmic side of the membrane; the sequence is EQNITTGRF. A helical membrane pass occupies residues 171-191; that stretch reads IMVLSLLSIVYGALRCNILAI. At 192–207 the chain is on the extracellular side; it reads KIKYDEYEVKVKPLAY. A helical transmembrane segment spans residues 208–228; that stretch reads VCIFLWRSFEIATRVIVLVLF. The Cytoplasmic segment spans residues 229–234; it reads TSVLKI. A helical transmembrane segment spans residues 235 to 255; the sequence is WVVVVILVNFFSFFLYPWILF. Residues 256–276 are Extracellular-facing; the sequence is WNSGSPFPENIEKALTRVGTT. The chain crosses the membrane as a helical span at residues 277 to 297; that stretch reads IVLGFLTLLYAGINMFCWSAV. Topologically, residues 298 to 316 are cytoplasmic; the sequence is QLKIDNPELISKSQNWYRL. The chain crosses the membrane as a helical span at residues 317–337; that stretch reads LIYYMMRFVENSVLLLLWFFF. Residues 338-348 are Extracellular-facing; that stretch reads KTDIYMYVCAP. Residues 349 to 369 traverse the membrane as a helical segment; sequence LLILQLLIGYCTSILFMLVFY. Over 370-445 the chain is Cytoplasmic; it reads QFFHPCKKLF…IWTAVDLCST (76 aa).

Belongs to the XK family. Heterodimer with Kell; disulfide-linked. Interacts with VPS13A.

The protein localises to the endoplasmic reticulum membrane. Recruits the lipid transfer protein VPS13A from lipid droplets to the endoplasmic reticulum (ER) membrane. This is Endoplasmic reticulum membrane adapter protein XK from Rattus norvegicus (Rat).